Reading from the N-terminus, the 514-residue chain is Anthranilate synthase component 1 (514 aa).

L-tryptophan contacts are provided by residues Thr-40 and 290–292 (PYM). 327–328 (GT) provides a ligand contact to chorismate. Glu-360 contacts Mg(2+). Residues Tyr-448, Arg-468, 482–484 (GAG), and Gly-484 each bind chorismate. Glu-497 contributes to the Mg(2+) binding site.

This sequence belongs to the anthranilate synthase component I family. As to quaternary structure, heterotetramer consisting of two non-identical subunits: a beta subunit (TrpG) and a large alpha subunit (TrpE). The cofactor is Mg(2+).

It carries out the reaction chorismate + L-glutamine = anthranilate + pyruvate + L-glutamate + H(+). It participates in amino-acid biosynthesis; L-tryptophan biosynthesis; L-tryptophan from chorismate: step 1/5. With respect to regulation, feedback inhibited by tryptophan. Its function is as follows. Part of a heterotetrameric complex that catalyzes the two-step biosynthesis of anthranilate, an intermediate in the biosynthesis of L-tryptophan. In the first step, the glutamine-binding beta subunit (TrpG) of anthranilate synthase (AS) provides the glutamine amidotransferase activity which generates ammonia as a substrate that, along with chorismate, is used in the second step, catalyzed by the large alpha subunit of AS (TrpE) to produce anthranilate. In the absence of TrpG, TrpE can synthesize anthranilate directly from chorismate and high concentrations of ammonia. This is Anthranilate synthase component 1 (trpE) from Buchnera aphidicola subsp. Rhopalosiphum padi.